The sequence spans 129 residues: Small ribosomal subunit protein uS11 (129 aa).

Belongs to the universal ribosomal protein uS11 family. Part of the 30S ribosomal subunit. Interacts with proteins S7 and S18. Binds to IF-3.

Its function is as follows. Located on the platform of the 30S subunit, it bridges several disparate RNA helices of the 16S rRNA. Forms part of the Shine-Dalgarno cleft in the 70S ribosome. The protein is Small ribosomal subunit protein uS11 of Photobacterium profundum (strain SS9).